The sequence spans 359 residues: Fe-S cluster assembly protein DRE2 (359 aa).

Residues 1–159 form an N-terminal SAM-like domain region; it reads MANILLLLHP…LFKKLSSNSN (159 aa). Residues 152–187 are disordered; sequence KKLSSNSNNNNNSSSPIGLTDSSAANTDEETDEANV. A compositionally biased stretch (low complexity) spans 155 to 166; sequence SSNSNNNNNSSS. Residues 159-228 are linker; that stretch reads NNNNNSSSPI…DDLIKDSNQL (70 aa). A compositionally biased stretch (polar residues) spans 167–177; that stretch reads PIGLTDSSAAN. 4 residues coordinate [2Fe-2S] cluster: Cys240, Cys252, Cys255, and Cys257. The interval 240–257 is fe-S binding site A; sequence CEIPNGKKRRKACKDCTC. [4Fe-4S] cluster-binding residues include Cys322, Cys325, Cys333, and Cys336. 2 short sequence motifs (cx2C motif) span residues 322 to 325 and 333 to 336; these read CGSC and CDGC. The interval 322–336 is fe-S binding site B; it reads CGSCALGDAFRCDGC.

Belongs to the anamorsin family. Monomer. Interacts with TAH18. Interacts with MIA40. [2Fe-2S] cluster is required as a cofactor. [4Fe-4S] cluster serves as cofactor.

Its subcellular location is the cytoplasm. The protein localises to the mitochondrion intermembrane space. Component of the cytosolic iron-sulfur (Fe-S) protein assembly (CIA) machinery required for the maturation of extramitochondrial Fe-S proteins. Part of an electron transfer chain functioning in an early step of cytosolic Fe-S biogenesis, facilitating the de novo assembly of a [4Fe-4S] cluster on the scaffold complex CFD1-NBP35. Electrons are transferred to DRE2 from NADPH via the FAD- and FMN-containing protein TAH18. TAH18-DRE2 are also required for the assembly of the diferric tyrosyl radical cofactor of ribonucleotide reductase (RNR), probably by providing electrons for reduction during radical cofactor maturation in the catalytic small subunit RNR2. In Scheffersomyces stipitis (strain ATCC 58785 / CBS 6054 / NBRC 10063 / NRRL Y-11545) (Yeast), this protein is Fe-S cluster assembly protein DRE2.